We begin with the raw amino-acid sequence, 159 residues long: uncharacterized protein (159 aa).

The helical transmembrane segment at 4-24 threads the bilayer; sequence QIALILSLIILIFFIYKFAMF.

It is found in the membrane. This is an uncharacterized protein from Acheta domesticus (House cricket).